The following is a 120-amino-acid chain: CLAVATA3/ESR (CLE)-related protein 9 (120 aa).

An N-terminal signal peptide occupies residues 1–26; that stretch reads MTMTHLNRLILISLLFVSLLLKSSTA. The N-linked (GlcNAc...) asparagine glycan is linked to Asn35. The interval 85-120 is disordered; that stretch reads RSSRKQPLLSPPPPEIDPRYGVDKRLVPSGPNPLHN. Residues 100–110 are compositionally biased toward basic and acidic residues; the sequence is IDPRYGVDKRL. Pro112 and Pro115 each carry hydroxyproline. Pro115 is a glycosylation site (O-linked (Ara...) hydroxyproline).

It belongs to the CLV3/ESR signal peptide family. Post-translationally, the O-glycosylation (arabinosylation) of the hydroxyproline Pro-115 enhances binding affinity of the CLE9p peptide for its receptor. Mostly expressed in leaves, flowers, stems and apex, and, to a lower extent, in seedlings, roots, siliques and pollen.

It is found in the secreted. The protein resides in the extracellular space. In terms of biological role, extracellular signal peptide that regulates cell fate. Represses root apical meristem maintenance. Regulates the transition of protophloem cells from proliferation to differentiation, thus impinging on postembryonic growth capacity of the root meristem; this signaling pathway requires CRN and CLV2. In Arabidopsis thaliana (Mouse-ear cress), this protein is CLAVATA3/ESR (CLE)-related protein 9.